Here is a 165-residue protein sequence, read N- to C-terminus: SsrA-binding protein (165 aa).

Belongs to the SmpB family.

It is found in the cytoplasm. In terms of biological role, required for rescue of stalled ribosomes mediated by trans-translation. Binds to transfer-messenger RNA (tmRNA), required for stable association of tmRNA with ribosomes. tmRNA and SmpB together mimic tRNA shape, replacing the anticodon stem-loop with SmpB. tmRNA is encoded by the ssrA gene; the 2 termini fold to resemble tRNA(Ala) and it encodes a 'tag peptide', a short internal open reading frame. During trans-translation Ala-aminoacylated tmRNA acts like a tRNA, entering the A-site of stalled ribosomes, displacing the stalled mRNA. The ribosome then switches to translate the ORF on the tmRNA; the nascent peptide is terminated with the 'tag peptide' encoded by the tmRNA and targeted for degradation. The ribosome is freed to recommence translation, which seems to be the essential function of trans-translation. This is SsrA-binding protein from Ruthia magnifica subsp. Calyptogena magnifica.